Here is a 446-residue protein sequence, read N- to C-terminus: Deoxyguanosinetriphosphate triphosphohydrolase-like protein (446 aa).

The interval 1–28 (MSSSVWQERRHGEDKQRRNDHRSPFQRD) is disordered. Residues 7–28 (QERRHGEDKQRRNDHRSPFQRD) are compositionally biased toward basic and acidic residues. Residues 59–252 (RLTHSLEVSQ…MELADDIAYA (194 aa)) form the HD domain.

The protein belongs to the dGTPase family. Type 2 subfamily.

The polypeptide is Deoxyguanosinetriphosphate triphosphohydrolase-like protein (Shewanella sp. (strain ANA-3)).